The following is a 555-amino-acid chain: Putative protein NRT1/ PTR FAMILY 2.14 (555 aa).

The next 12 helical transmembrane spans lie at 62-82 (VTLINTWSALTNFAPIIGAFI), 93-113 (IVFGSIAELLGMLVLTFTSLV), 135-155 (YSQLYVLLSGLFLLSVGTGGI), 181-201 (FFSWYYTTHTIVQLVSMTLVL), 209-229 (WGIGFAIPTVLNFFALLLLFV), 234-254 (YVFVKPEGSVFSGVFKVLVAA), 319-339 (IKSIISIIPIFASSIIGFLAM), 363-383 (LIPPASITVISLLNIGIWLPF), 405-425 (LQKVGIGNIFSISTMLISGIV), 441-461 (VFWLTPQQVLMGFYQVFTIVG), 480-500 (SLLYLGLSLASYLSSAMVSIV), and 523-543 (CFYYFIAALSTLNFIFFFWCA).

This sequence belongs to the major facilitator superfamily. Proton-dependent oligopeptide transporter (POT/PTR) (TC 2.A.17) family. As to expression, not detected.

It localises to the membrane. The sequence is that of Putative protein NRT1/ PTR FAMILY 2.14 (NPF2.14) from Arabidopsis thaliana (Mouse-ear cress).